The sequence spans 828 residues: Periplasmic nitrate reductase (828 aa).

Residues 1–31 constitute a signal peptide (tat-type signal); sequence MKLSRRSFMKANAVAAAAAAAGLSVPGVARA. In terms of domain architecture, 4Fe-4S Mo/W bis-MGD-type spans 39-95; the sequence is IKWDKAPCRFCGTGCGVLVGTQQGRVVACQGDPDAPVNRGLNCIKGYFLPKIMYGKD. Cysteine 46, cysteine 49, cysteine 53, and cysteine 81 together coordinate [4Fe-4S] cluster. Mo-bis(molybdopterin guanine dinucleotide) is bound by residues lysine 83, glutamine 150, asparagine 175, cysteine 179, 212–219, 243–247, 262–264, methionine 372, glutamine 376, asparagine 482, 508–509, lysine 531, aspartate 558, and 718–727; these read WGSNMAEM, STYQH, QSD, SD, and TGRVLEHWHT. Position 794 (phenylalanine 794) interacts with substrate. Residues asparagine 802 and lysine 819 each contribute to the Mo-bis(molybdopterin guanine dinucleotide) site.

Belongs to the prokaryotic molybdopterin-containing oxidoreductase family. NasA/NapA/NarB subfamily. In terms of assembly, component of the periplasmic nitrate reductase NapAB complex composed of NapA and NapB. Requires [4Fe-4S] cluster as cofactor. It depends on Mo-bis(molybdopterin guanine dinucleotide) as a cofactor. Post-translationally, predicted to be exported by the Tat system. The position of the signal peptide cleavage has not been experimentally proven.

It localises to the periplasm. It catalyses the reaction 2 Fe(II)-[cytochrome] + nitrate + 2 H(+) = 2 Fe(III)-[cytochrome] + nitrite + H2O. In terms of biological role, catalytic subunit of the periplasmic nitrate reductase complex NapAB. Receives electrons from NapB and catalyzes the reduction of nitrate to nitrite. The sequence is that of Periplasmic nitrate reductase from Escherichia coli O127:H6 (strain E2348/69 / EPEC).